The following is a 1690-amino-acid chain: Trinucleotide repeat-containing gene 6C protein (1690 aa).

3 stretches are compositionally biased toward polar residues: residues 1–12, 19–36, and 160–183; these read MATGSAQSSFPS, GSHG…NQSA, and AEPQ…NTDG. Disordered regions lie at residues 1-42, 158-202, 226-848, and 863-928; these read MATG…AGGT, ESAE…AMQT, PGAN…EPVV, and CKPA…TPGK. Residues 1 to 921 are sufficient for interaction with argonaute family proteins; the sequence is MATGSAQSSF…GNTSKKGLQK (921 aa). Over residues 184-198 the composition is skewed to low complexity; it reads PNNTNPMNSSPNPIN. Residues 255 to 288 are compositionally biased toward polar residues; the sequence is NPATGSTNCGFSQGNGDTVNSALSAKQNGSSSAV. Arginine 313 is subject to Omega-N-methylarginine. Positions 362 to 374 are enriched in polar residues; the sequence is GWDSASAASQTPA. Residues 384–404 are compositionally biased toward low complexity; it reads SWAKATSSGTTASEGSSDGSG. The span at 415-426 shows a compositional bias: basic and acidic residues; sequence GTGEGRRRDKGV. The segment covering 444–459 has biased composition (polar residues); that stretch reads LSNSGWGQTPVKQNTA. The segment covering 464–474 has biased composition (basic and acidic residues); the sequence is ESPRSERKNDN. Phosphoserine is present on serine 465. Polar residues-rich tracts occupy residues 482 to 510, 519 to 530, 540 to 551, 644 to 656, and 663 to 678; these read IATQ…SGWV, ANTSWGDSNNKA, SISSTAVNNAAA, GTNA…TNWG, and PQQN…NVSN. The residue at position 714 (serine 714) is a Phosphoserine. Positions 754-771 are enriched in low complexity; that stretch reads SSTTAPATPTTPTSSSTT. The residue at position 776 (threonine 776) is a Phosphothreonine. The segment covering 778–788 has biased composition (polar residues); sequence PSHQAGTQLNR. Residues 901–915 show a composition bias toward low complexity; sequence SQESSSSCSSWGNTS. The UBA domain occupies 928 to 973; the sequence is KQDEAWIMSRLIKQLTDMGFPREPAEEALKSNSMNLDQAMSALLEK. At serine 1006 the chain carries Phosphoserine. The stretch at 1156 to 1214 forms a coiled coil; the sequence is QLQLAYQRLQIQQQMLQAQRNVSGPMRQQEQQVARTITNLQQQIQQHQRQLAQALLVKQ. Disordered stretches follow at residues 1212-1337, 1351-1380, 1397-1421, 1441-1486, and 1600-1625; these read VKQP…PPGK, QNSE…ISNG, GLQN…PTIN, IKST…PSST, and PPTS…THGL. Residues 1214–1223 are compositionally biased toward pro residues; sequence QPPPPPPPPH. The silencing domain; interaction with CNOT1 and PAN3 stretch occupies residues 1260-1690; that stretch reads NTFAPYPLAG…PGDLLSGESI (431 aa). A compositionally biased stretch (polar residues) spans 1272-1321; that stretch reads PNMNVNSIDMSSGLSVKDPSQSQSRLPQWTHPNSMGNLSSAASPLDQNPS. A required for interaction with PABPC1 region spans residues 1371-1417; the sequence is KSDSDKISNGSSISWPPEFHPGVPWKGLQNIDPENDPDVTPGSVPTG. Positions 1371 to 1690 are sufficient for translational repression when tethered to a target mRNA; the sequence is KSDSDKISNG…PGDLLSGESI (320 aa). A PABPC1-interacting motif-2 (PAM2) region spans residues 1381–1399; it reads SSISWPPEFHPGVPWKGLQ. Over residues 1441 to 1457 the composition is skewed to polar residues; it reads IKSTWSSGPASHTQASL. The RRM domain occupies 1565–1632; the sequence is AQKSLHMCVL…HGLVRSDTAH (68 aa). Residues 1596 to 1690 are interaction with the CCR4-NOT complex; that stretch reads GQALPPTSSW…PGDLLSGESI (95 aa). Low complexity predominate over residues 1603 to 1613; the sequence is SSWQSSSGGSQ.

The protein belongs to the GW182 family. As to quaternary structure, interacts with one or more of the argonaute family proteins AGO1, AGO2, AGO3 and AGO4. Interacts with CNOT1; the interaction mediates the association with the CCR4-NOT complex. Interacts with PAN3; the interaction mediates the association with the PAN complex.

In terms of biological role, plays a role in RNA-mediated gene silencing by micro-RNAs (miRNAs). Required for miRNA-dependent translational repression of complementary mRNAs by argonaute family proteins As scaffoldng protein associates with argonaute proteins bound to partially complementary mRNAs and simultaneously can recruit CCR4-NOT and PAN deadenylase complexes. This is Trinucleotide repeat-containing gene 6C protein (Tnrc6c) from Mus musculus (Mouse).